A 471-amino-acid chain; its full sequence is MERLLVWIEHISDWLWGPPLIILLTGTGLYFTILLKGFQFRYPLYIFKQTIGSVGKKPKGEGTVTPLQALTSALSSTIGAANIVGVPAAIMFGGPGAVFWMWLIALFAMAIKFSESVLAVHYREKNEQGEYVGGPMYYITKGLRMKWLGVFFSVALIVELIPSIMVQGNSVSVSLAETFSFNKIYAGIGIAFLIGLVVIGGVKRIGKVTEFVVPLMAGAYAGAGLLIVLMNLSSVPAFFSLVFSNAFTSSSAVGGFAGAALAETVRWGFARGLYSNEAGMGTAPIAHAAAMTDHPVRQGFWSVIGIVIDTLIICTTTAFIVLASGVWTGKNASNDPAALTTAAFQHYFGSGGGYFVSVSLVFFVVSTIMVVIFYGVKQAEFLFGRLAGHVIKFVYLAAIIIGAAGGAKAIWGVLDLALVFIVVPNVIALLLLSRKVKALYTEFFTSEQYYLKDIRKTKQKPVYPTKEAKNS.

Transmembrane regions (helical) follow at residues 15–35, 66–86, 89–109, 147–167, 179–199, 210–230, 237–257, 303–323, 353–373, 386–406, and 410–430; these read LWGPPLIILLTGTGLYFTILL, PLQALTSALSSTIGAANIVGV, AIMFGGPGAVFWMWLIALFAM, WLGVFFSVALIVELIPSIMVQ, FSFNKIYAGIGIAFLIGLVVI, EFVVPLMAGAYAGAGLLIVLM, AFFSLVFSNAFTSSSAVGGFA, VIGIVIDTLIICTTTAFIVLA, GYFVSVSLVFFVVSTIMVVIF, LAGHVIKFVYLAAIIIGAAGG, and IWGVLDLALVFIVVPNVIALL.

This sequence belongs to the alanine or glycine:cation symporter (AGCS) (TC 2.A.25) family.

It is found in the cell membrane. This is an uncharacterized protein from Bacillus subtilis (strain 168).